We begin with the raw amino-acid sequence, 620 residues long: 1-deoxy-D-xylulose-5-phosphate synthase (620 aa).

Thiamine diphosphate is bound by residues His80 and 121–123 (GHS). Mg(2+) is bound at residue Asp152. Residues 153–154 (GA), Asn181, Tyr288, and Glu370 each bind thiamine diphosphate. Residue Asn181 participates in Mg(2+) binding.

Belongs to the transketolase family. DXPS subfamily. As to quaternary structure, homodimer. Requires Mg(2+) as cofactor. Thiamine diphosphate serves as cofactor.

The enzyme catalyses D-glyceraldehyde 3-phosphate + pyruvate + H(+) = 1-deoxy-D-xylulose 5-phosphate + CO2. It participates in metabolic intermediate biosynthesis; 1-deoxy-D-xylulose 5-phosphate biosynthesis; 1-deoxy-D-xylulose 5-phosphate from D-glyceraldehyde 3-phosphate and pyruvate: step 1/1. In terms of biological role, catalyzes the acyloin condensation reaction between C atoms 2 and 3 of pyruvate and glyceraldehyde 3-phosphate to yield 1-deoxy-D-xylulose-5-phosphate (DXP). This is 1-deoxy-D-xylulose-5-phosphate synthase from Salmonella agona (strain SL483).